A 574-amino-acid polypeptide reads, in one-letter code: FAD-linked oxidoreductase sor8 (574 aa).

Residues M1–A27 form the signal peptide. N58, N112, N136, N266, N312, N363, and N384 each carry an N-linked (GlcNAc...) asparagine glycan. Residues V126–N305 enclose the FAD-binding PCMH-type domain.

It belongs to the oxygen-dependent FAD-linked oxidoreductase family. Requires FAD as cofactor.

It participates in secondary metabolite biosynthesis. Functionally, FAD-linked oxidoreductase; part of the SOR gene cluster that mediates the biosynthesis of sorbicillinoids, a diverse group of yellow secondary metabolites that restrict growth of competing pathogenic fungi but not of bacteria. Sorbicillinoids biosynthesis requires the action of two PKSs. The SOR cluster is required for the production of trichodimerol and dihydrotrichotetronin, with sor2 being sufficient for production of trichodimerol, but not dihydrotrichotetronin in the light. Sor1 iteratively combines three acetyl units and the growing chain is modified by the ketoacyl reductase subunit, and optional by the enoyl reductase subunit in the second cycle. The polyketide is then handed over to the PKS sor2, which adds three more acetyl units, and two methyl groups. Sor2 releases an aldehyde, which undergoes spontaneous cyclization resulting in the formation of sorbicillin or 2',3'-dihydrosorbicillin. The monooxygenase sor5 oxidizes sorbicillin and 2',3'-dihydrosorbicillin to 2',3'-dihydrosorbicillinol and sorbicillinol, respectively. The oxidoreductase sor8 further converts sorbicillinol into oxosorbicillinol. Sorbicillinol is the building block for the other sorbicillinoids such as disorbicillinol, bisvertinolon, dihydrobisvertinolone, and dihydrotrichotetronine. The protein is FAD-linked oxidoreductase sor8 of Hypocrea jecorina (strain QM6a) (Trichoderma reesei).